Here is a 90-residue protein sequence, read N- to C-terminus: Elongation factor 1-beta (90 aa).

This sequence belongs to the EF-1-beta/EF-1-delta family.

Functionally, promotes the exchange of GDP for GTP in EF-1-alpha/GDP, thus allowing the regeneration of EF-1-alpha/GTP that could then be used to form the ternary complex EF-1-alpha/GTP/AAtRNA. The chain is Elongation factor 1-beta from Sulfolobus acidocaldarius (strain ATCC 33909 / DSM 639 / JCM 8929 / NBRC 15157 / NCIMB 11770).